We begin with the raw amino-acid sequence, 183 residues long: Outer membrane protein H.8 (183 aa).

A signal peptide spans 1-17; sequence MKAYLALISAAVIGLAA. C18 carries N-palmitoyl cysteine lipidation. The S-diacylglycerol cysteine moiety is linked to residue C18. A disordered region spans residues 27 to 51; the sequence is AEATPAGEAPASEAPAAEAAPADAA. Residues 57–183 form the Plastocyanin-like domain; the sequence is GNCAATVESN…LMNGKVTLVD (127 aa). H102, C166, H171, and M175 together coordinate Cu cation.

The cofactor is Cu cation.

Its subcellular location is the cell outer membrane. In Neisseria gonorrhoeae, this protein is Outer membrane protein H.8.